Consider the following 314-residue polypeptide: Probable serine/threonine-protein kinase WNK11 (314 aa).

A disordered region spans residues 1–22; that stretch reads MMTCASSDDNESEKDKDSESFV. The Protein kinase domain maps to 31 to 289; it reads GRYGELLGSG…AAELLCDPFF (259 aa). 111 to 114 serves as a coordination point for ATP; sequence TEIC. D178 acts as the Proton acceptor in catalysis. The disordered stretch occupies residues 295–314; sequence DDDEDGENNDNNGAGRIVVS.

Belongs to the protein kinase superfamily. Ser/Thr protein kinase family. WNK subfamily.

The enzyme catalyses L-seryl-[protein] + ATP = O-phospho-L-seryl-[protein] + ADP + H(+). It catalyses the reaction L-threonyl-[protein] + ATP = O-phospho-L-threonyl-[protein] + ADP + H(+). In terms of biological role, may regulate flowering time by modulating the photoperiod pathway. This Arabidopsis thaliana (Mouse-ear cress) protein is Probable serine/threonine-protein kinase WNK11 (WNK11).